The following is a 426-amino-acid chain: Serine--tRNA ligase (426 aa).

233-235 (TAE) contacts L-serine. 264 to 266 (RSE) contributes to the ATP binding site. Glutamate 287 provides a ligand contact to L-serine. Residue 351-354 (EISS) participates in ATP binding. L-serine is bound at residue serine 387.

Belongs to the class-II aminoacyl-tRNA synthetase family. Type-1 seryl-tRNA synthetase subfamily. Homodimer. The tRNA molecule binds across the dimer.

The protein localises to the cytoplasm. It catalyses the reaction tRNA(Ser) + L-serine + ATP = L-seryl-tRNA(Ser) + AMP + diphosphate + H(+). The enzyme catalyses tRNA(Sec) + L-serine + ATP = L-seryl-tRNA(Sec) + AMP + diphosphate + H(+). Its pathway is aminoacyl-tRNA biosynthesis; selenocysteinyl-tRNA(Sec) biosynthesis; L-seryl-tRNA(Sec) from L-serine and tRNA(Sec): step 1/1. In terms of biological role, catalyzes the attachment of serine to tRNA(Ser). Is also able to aminoacylate tRNA(Sec) with serine, to form the misacylated tRNA L-seryl-tRNA(Sec), which will be further converted into selenocysteinyl-tRNA(Sec). The polypeptide is Serine--tRNA ligase (Pseudomonas aeruginosa (strain LESB58)).